The primary structure comprises 411 residues: Adenylosuccinate synthetase (411 aa).

GTP-binding positions include 11-17 (GDEGKGK) and 39-41 (GHT). The Proton acceptor role is filled by aspartate 12. 2 residues coordinate Mg(2+): aspartate 12 and glycine 39. Residues 12–15 (DEGK), 37–40 (NAGH), threonine 121, arginine 135, glutamine 215, threonine 230, and arginine 294 each bind IMP. The Proton donor role is filled by histidine 40. 290–296 (TTTKRPR) is a substrate binding site. Residues arginine 296, 322–324 (KLD), and 400–402 (STS) contribute to the GTP site.

This sequence belongs to the adenylosuccinate synthetase family. In terms of assembly, homodimer. Mg(2+) serves as cofactor.

It is found in the cytoplasm. It carries out the reaction IMP + L-aspartate + GTP = N(6)-(1,2-dicarboxyethyl)-AMP + GDP + phosphate + 2 H(+). The protein operates within purine metabolism; AMP biosynthesis via de novo pathway; AMP from IMP: step 1/2. In terms of biological role, plays an important role in the de novo pathway of purine nucleotide biosynthesis. Catalyzes the first committed step in the biosynthesis of AMP from IMP. This Helicobacter pylori (strain J99 / ATCC 700824) (Campylobacter pylori J99) protein is Adenylosuccinate synthetase.